The sequence spans 105 residues: UPF0235 protein RrIowa_1526 (105 aa).

It belongs to the UPF0235 family.

The protein is UPF0235 protein RrIowa_1526 of Rickettsia rickettsii (strain Iowa).